We begin with the raw amino-acid sequence, 197 residues long: Segregation and condensation protein B (197 aa).

Belongs to the ScpB family. Homodimer. Homodimerization may be required to stabilize the binding of ScpA to the Smc head domains. Component of a cohesin-like complex composed of ScpA, ScpB and the Smc homodimer, in which ScpA and ScpB bind to the head domain of Smc. The presence of the three proteins is required for the association of the complex with DNA.

It is found in the cytoplasm. Its function is as follows. Participates in chromosomal partition during cell division. May act via the formation of a condensin-like complex containing Smc and ScpA that pull DNA away from mid-cell into both cell halves. The polypeptide is Segregation and condensation protein B (Bacillus pumilus (strain SAFR-032)).